We begin with the raw amino-acid sequence, 49 residues long: Large ribosomal subunit protein bL33A (49 aa).

The protein belongs to the bacterial ribosomal protein bL33 family.

The polypeptide is Large ribosomal subunit protein bL33A (Geobacillus kaustophilus (strain HTA426)).